The primary structure comprises 423 residues: Putative competence-damage inducible protein (423 aa).

This sequence belongs to the CinA family.

This Streptococcus equi subsp. zooepidemicus (strain H70) protein is Putative competence-damage inducible protein.